The sequence spans 134 residues: Ribosome-binding factor A (134 aa).

It belongs to the RbfA family. Monomer. Binds 30S ribosomal subunits, but not 50S ribosomal subunits or 70S ribosomes.

The protein localises to the cytoplasm. In terms of biological role, one of several proteins that assist in the late maturation steps of the functional core of the 30S ribosomal subunit. Associates with free 30S ribosomal subunits (but not with 30S subunits that are part of 70S ribosomes or polysomes). Required for efficient processing of 16S rRNA. May interact with the 5'-terminal helix region of 16S rRNA. This is Ribosome-binding factor A from Sinorhizobium medicae (strain WSM419) (Ensifer medicae).